Reading from the N-terminus, the 967-residue chain is Leucine--tRNA ligase (967 aa).

The 'HIGH' region signature appears at 43 to 53 (PYLSGHLHVGH). Positions 650 to 654 (KMSKS) match the 'KMSKS' region motif. Position 653 (Lys-653) interacts with ATP.

It belongs to the class-I aminoacyl-tRNA synthetase family.

It is found in the cytoplasm. It carries out the reaction tRNA(Leu) + L-leucine + ATP = L-leucyl-tRNA(Leu) + AMP + diphosphate. In Thermococcus onnurineus (strain NA1), this protein is Leucine--tRNA ligase.